The primary structure comprises 114 residues: MSDIDQIPLTFTDAAAKKVKSLIEGEDNPNLRLRVYITGGGCSGFQYGFTFDDKINEGDLTIENQNVGLIVDPMSLQYLIGGSVDYTEGLDGSRFVVQNPNASSTCGCGSSFSI.

Positions 42, 106, and 108 each coordinate iron-sulfur cluster.

The protein belongs to the HesB/IscA family. Homodimer. Requires iron-sulfur cluster as cofactor.

Required for insertion of 4Fe-4S clusters for at least IspG. This Haemophilus ducreyi (strain 35000HP / ATCC 700724) protein is Iron-sulfur cluster insertion protein ErpA.